Consider the following 157-residue polypeptide: UPF0225 protein PSPPH_1399 (157 aa).

It belongs to the UPF0225 family.

In Pseudomonas savastanoi pv. phaseolicola (strain 1448A / Race 6) (Pseudomonas syringae pv. phaseolicola (strain 1448A / Race 6)), this protein is UPF0225 protein PSPPH_1399.